The sequence spans 515 residues: Cytochrome P450 monooxygenase ptmJ (515 aa).

4 helical membrane-spanning segments follow: residues 6-26 (LGPF…LFVI), 50-70 (LGVV…LFCV), 82-102 (VFYL…EPVV), and 300-320 (VIIL…LFLH). Cys-449 provides a ligand contact to heme.

Belongs to the cytochrome P450 family. The cofactor is heme.

It is found in the membrane. It functions in the pathway secondary metabolite biosynthesis. Its function is as follows. Cytochrome P450 monooxygenase; part of the gene cluster that mediates the biosynthesis of the indole diterpenes penitrems. The geranylgeranyl diphosphate (GGPP) synthase ptmG catalyzes the first step in penitrem biosynthesis via conversion of farnesyl pyrophosphate and isopentyl pyrophosphate into geranylgeranyl pyrophosphate (GGPP). Condensation of indole-3-glycerol phosphate with GGPP by the prenyl transferase ptmC then forms 3-geranylgeranylindole (3-GGI). Epoxidation by the FAD-dependent monooxygenase ptmM leads to a epoxidized-GGI that is substrate of the terpene cyclase ptmB for cyclization to yield paspaline. Paspaline is subsequently converted to 13-desoxypaxilline by the cytochrome P450 monooxygenase ptmP, the latter being then converted to paxilline by the cytochrome P450 monooxygenase ptmQ. Paxilline is converted to beta-paxitriol via C-10 ketoreduction by the short-chain dehydrogenase ptmH which can be monoprenylated at the C-20 by the indole diterpene prenyltransferase ptmD. A two-step elimination (acetylation and elimination) process performed by the O-acetyltransferase ptmV and ptmI leads to the production of the prenylated form of penijanthine. The FAD-linked oxidoreductase ptmO then converts the prenylated form of penijanthine into PC-M5 which is in turn transformed into PC-M4 by the aromatic dimethylallyltransferase ptmE. Five sequential oxidative transformations performed by the cytochrome P450 monooxygenases ptmK, ptmU, ptmL, ptmN and ptmJ yield the various penitrem compounds. PtmK, ptmU and ptmM are involved in the formation of the key bicyclic ring of penitrem C via the formation of the intermediates secopenitrem D and penitrem D. PtmL catalyzes the epoxidation of penitrem D and C to yield penitrem B and F, respectively. PtmJ catalyzes the last benzylic hydroxylation to convert penitrem B to prenitrem E and penitrem F to penitrem A. This is Cytochrome P450 monooxygenase ptmJ from Penicillium ochrochloron.